The primary structure comprises 430 residues: Serine hydroxymethyltransferase 2 (430 aa).

Residues leucine 128 and 132–134 (GHL) each bind (6S)-5,6,7,8-tetrahydrofolate. Residue lysine 237 is modified to N6-(pyridoxal phosphate)lysine.

Belongs to the SHMT family. As to quaternary structure, homodimer. Pyridoxal 5'-phosphate serves as cofactor.

The protein resides in the cytoplasm. It carries out the reaction (6R)-5,10-methylene-5,6,7,8-tetrahydrofolate + glycine + H2O = (6S)-5,6,7,8-tetrahydrofolate + L-serine. The protein operates within one-carbon metabolism; tetrahydrofolate interconversion. It participates in amino-acid biosynthesis; glycine biosynthesis; glycine from L-serine: step 1/1. Catalyzes the reversible interconversion of serine and glycine with tetrahydrofolate (THF) serving as the one-carbon carrier. This reaction serves as the major source of one-carbon groups required for the biosynthesis of purines, thymidylate, methionine, and other important biomolecules. Also exhibits THF-independent aldolase activity toward beta-hydroxyamino acids, producing glycine and aldehydes, via a retro-aldol mechanism. This chain is Serine hydroxymethyltransferase 2, found in Rhodospirillum rubrum (strain ATCC 11170 / ATH 1.1.1 / DSM 467 / LMG 4362 / NCIMB 8255 / S1).